The primary structure comprises 103 residues: Putative ribosomal RNA-processing protein 7 homolog B (103 aa).

Over residues 1–19 (MEAYDQKIAEEEAKAKEEE) the composition is skewed to basic and acidic residues. The interval 1-25 (MEAYDQKIAEEEAKAKEEEGVPDEE) is disordered. Residues 71–100 (ESKMEHLAQLRKKFEEDKQRIELLRAQRKF) adopt a coiled-coil conformation.

Belongs to the RRP7 family.

In Homo sapiens (Human), this protein is Putative ribosomal RNA-processing protein 7 homolog B.